The chain runs to 155 residues: Egg-lysin (155 aa).

Residues Met1–Ser18 form the signal peptide.

As to quaternary structure, monomer. Homodimer. Molecules associate into dimers and then rapidly dissociate again. Interacts (as a monomer) with the egg vitelline layer protein VERL (via VERL repeats); each VERL chain can bind multiple copies of lysin. In terms of tissue distribution, sperm (at protein level).

Its subcellular location is the cytoplasmic vesicle. It localises to the secretory vesicle. The protein resides in the acrosome lumen. Creates a 3 um hole in the egg vitelline layer through which the sperm passes. Does not have enzyme activity. Species-specific interaction between the sperm protein lysin and the egg protein VERL exposes a basic surface on lysin that may dissociate the egg vitelline layer via electrostatic repulsion. Plays a role in ensuring species-specific fertilization. This Haliotis corrugata (Pink abalone) protein is Egg-lysin.